We begin with the raw amino-acid sequence, 295 residues long: MYSAIRSLPLDGGHVGGDYHGPLDGTNLPGDACLVLTTDPKPRLRWTTELHERFVDAVTQLGGPDKATPKTIMRTMGVKGLTLYHLKSHLQKFRLGRQAGKESTENSKDASCVGESQDTGSSSTSSMRMAQQEQNEGYQVTEALRAQMEVQRRLHDQLEVQRRLQLRIEAQGKYLQSILEKACKAFDEQAATFAGLEAAREELSELAIKVSNSSQGTSVPYFDATKMMMMPSLSELAVAIDNKNNITTNCSVESSLTSITHGSSISAASMKKRQRGDNLGVGYESGWIMPSSTIG.

In terms of domain architecture, HTH myb-type spans 38–98 (TDPKPRLRWT…HLQKFRLGRQ (61 aa)). The segment at residues 69–94 (PKTIMRTMGVKGLTLYHLKSHLQKFR) is a DNA-binding region (H-T-H motif). The disordered stretch occupies residues 96–138 (GRQAGKESTENSKDASCVGESQDTGSSSTSSMRMAQQEQNEGY). A compositionally biased stretch (basic and acidic residues) spans 99–108 (AGKESTENSK). A compositionally biased stretch (polar residues) spans 127–138 (MRMAQQEQNEGY). The stretch at 141–161 (TEALRAQMEVQRRLHDQLEVQ) forms a coiled coil. An LHEQLE motif is present at residues 154–159 (LHDQLE).

Belongs to the MYB-CC family. As to quaternary structure, homo- and heterodimers. Interacts with PHL3, but not with PHR1.

It localises to the nucleus. Transcriptional activator. Acts redundantly with PHR1 as a key component of the central regulatory system controlling transcriptional responses to Pi starvation. Binds in a sequence-specific manner to phosphate starvation-regulated promoters. The protein is Protein PHR1-LIKE 2 of Arabidopsis thaliana (Mouse-ear cress).